Consider the following 301-residue polypeptide: HPr kinase/phosphorylase (301 aa).

Active-site residues include His-134 and Lys-155. 149–156 (GKSGLGKS) is an ATP binding site. Ser-156 contacts Mg(2+). Asp-173 serves as the catalytic Proton acceptor; for phosphorylation activity. Proton donor; for dephosphorylation activity. Positions 196–205 (LEVRGLGIIN) are important for the catalytic mechanism of both phosphorylation and dephosphorylation. Glu-197 is a binding site for Mg(2+). Arg-239 is an active-site residue. Residues 260 to 265 (PITPGK) are important for the catalytic mechanism of dephosphorylation.

This sequence belongs to the HPrK/P family. In terms of assembly, homohexamer. It depends on Mg(2+) as a cofactor.

It carries out the reaction [HPr protein]-L-serine + ATP = [HPr protein]-O-phospho-L-serine + ADP + H(+). The enzyme catalyses [HPr protein]-O-phospho-L-serine + phosphate + H(+) = [HPr protein]-L-serine + diphosphate. In terms of biological role, catalyzes the ATP- as well as the pyrophosphate-dependent phosphorylation of a specific serine residue in HPr, a phosphocarrier protein of the phosphoenolpyruvate-dependent sugar phosphotransferase system (PTS). HprK/P also catalyzes the pyrophosphate-producing, inorganic phosphate-dependent dephosphorylation (phosphorolysis) of seryl-phosphorylated HPr (P-Ser-HPr). The two antagonistic activities of HprK/P are regulated by several intracellular metabolites, which change their concentration in response to the absence or presence of rapidly metabolisable carbon sources (glucose, fructose, etc.) in the growth medium. Therefore, by controlling the phosphorylation state of HPr, HPrK/P is a sensor enzyme that plays a major role in the regulation of carbon metabolism and sugar transport: it mediates carbon catabolite repression (CCR), and regulates PTS-catalyzed carbohydrate uptake and inducer exclusion. This Malacoplasma penetrans (strain HF-2) (Mycoplasma penetrans) protein is HPr kinase/phosphorylase.